A 24-amino-acid chain; its full sequence is Erythromycin resistance leader peptide (24 aa).

A compositionally biased stretch (low complexity) spans 1 to 14 (MSMGIAARPPRAAL). The disordered stretch occupies residues 1–24 (MSMGIAARPPRAALLPPPSVPRSR). Pro residues predominate over residues 15 to 24 (LPPPSVPRSR).

This peptide is involved in the control mechanism of the synthesis of the macrolide-lincosamide-streptogramin B resistance protein. The protein is Erythromycin resistance leader peptide of Streptomyces fradiae (Streptomyces roseoflavus).